The chain runs to 501 residues: Type II secretion system protein E (501 aa).

262 to 269 is a binding site for ATP; that stretch reads GPTGSGKS. Residues C395, C398, C428, and C431 each contribute to the Zn(2+) site.

Belongs to the GSP E family. As to quaternary structure, forms homooligomers; most probably hexamers. Interacts with ExeL/GspL. Zn(2+) is required as a cofactor.

It localises to the cell inner membrane. It carries out the reaction ATP + H2O + cellular proteinSide 1 = ADP + phosphate + cellular proteinSide 2.. Its function is as follows. ATPase component of the type II secretion system required for the energy-dependent secretion of extracellular factors such as proteases and toxins from the periplasm. Acts as a molecular motor to provide the energy that is required for assembly of the pseudopilus and the extrusion of substrates generated in the cytoplasm. The protein is Type II secretion system protein E (exeE) of Aeromonas hydrophila.